Reading from the N-terminus, the 439-residue chain is CBL-interacting serine/threonine-protein kinase 20 (439 aa).

The Protein kinase domain occupies 12-266; sequence YELGRLLGQG…IEKIMENSWF (255 aa). Residues 18 to 26 and lysine 41 contribute to the ATP site; that span reads LGQGTFAKV. Aspartate 134 serves as the catalytic Proton acceptor. Residues 152–181 are activation loop; that stretch reads DFGLSALRESKQQDGLLHTTCGTPAYVAPE. Serine 156 bears the Phosphoserine mark. Threonine 170 is subject to Phosphothreonine. The NAF domain maps to 297-322; it reads VKPMSYNAFDLISSLSQGFDLSGLFE. The PPI stretch occupies residues 326–356; it reads RSESKFTTKKDAKEIVSKFEEIATSSERFNL.

It belongs to the protein kinase superfamily. CAMK Ser/Thr protein kinase family. SNF1 subfamily. The cofactor is Mn(2+). Post-translationally, autophosphorylated. In terms of tissue distribution, confined to mature leaves.

The catalysed reaction is L-seryl-[protein] + ATP = O-phospho-L-seryl-[protein] + ADP + H(+). The enzyme catalyses L-threonyl-[protein] + ATP = O-phospho-L-threonyl-[protein] + ADP + H(+). CIPK serine-threonine protein kinases interact with CBL proteins. Binding of a CBL protein to the regulatory NAF domain of CIPK protein lead to the activation of the kinase in a calcium-dependent manner. Required for the abscisic acid-mediated (ABA) signaling pathway involved in seed germination and growth elongation inhibition. The sequence is that of CBL-interacting serine/threonine-protein kinase 20 (CIPK20) from Arabidopsis thaliana (Mouse-ear cress).